We begin with the raw amino-acid sequence, 292 residues long: NAC domain-containing protein 96 (292 aa).

The 153-residue stretch at leucine 6–lysine 158 folds into the NAC domain. Residues isoleucine 106 to asparagine 164 mediate DNA binding. The interval proline 171–phenylalanine 199 is disordered. Residues serine 172 to proline 191 are compositionally biased toward polar residues.

Interacts with ABF2 and ABF4. As to expression, expressed in roots, rosettes leaves, cauline leaves and stems.

It localises to the nucleus. In terms of biological role, transcriptional activator involved in the positive regulation of abscisic acid (ABA) responsive genes. Acts as a positive factor of ABA-mediated responses. Involved in the transcriptional activation of ABA-inducible genes in response to dehydration and osmotic stresses. Plays a positive role in both stomatal closure and water loss under dehydration stress conditions. Acts synergistically with ABF2 to activate the dehydration stress-response factor RD29A transcription. Binds to the consensus core cis-acting elements 5'-CGTA-3' and 5'-CACG-3' at the RD29A promoter. Involved in hypocotyl graft union formation. Required for the auxin-mediated promotion of vascular tissue proliferation during hypocotyl graft attachment. The protein is NAC domain-containing protein 96 of Arabidopsis thaliana (Mouse-ear cress).